The following is a 339-amino-acid chain: 1-aminocyclopropane-1-carboxylate deaminase (339 aa).

N6-(pyridoxal phosphate)lysine is present on Lys-52. The Nucleophile role is filled by Ser-79.

Belongs to the ACC deaminase/D-cysteine desulfhydrase family. In terms of assembly, homotrimer. Pyridoxal 5'-phosphate serves as cofactor.

The catalysed reaction is 1-aminocyclopropane-1-carboxylate + H2O = 2-oxobutanoate + NH4(+). Catalyzes a cyclopropane ring-opening reaction, the irreversible conversion of 1-aminocyclopropane-1-carboxylate (ACC) to ammonia and alpha-ketobutyrate. Allows growth on ACC as a nitrogen source. The chain is 1-aminocyclopropane-1-carboxylate deaminase from Bradyrhizobium sp. (strain ORS 278).